A 260-amino-acid polypeptide reads, in one-letter code: Thaumatin-like protein 1 (260 aa).

Positions 1–32 are cleaved as a signal peptide; sequence MIITVLHSHVSFYFIILSFLFFHALHLVGSDG. Cystine bridges form between cysteine 41–cysteine 255, cysteine 89–cysteine 100, cysteine 105–cysteine 112, cysteine 166–cysteine 245, cysteine 171–cysteine 228, cysteine 179–cysteine 191, cysteine 195–cysteine 204, and cysteine 205–cysteine 215.

It belongs to the thaumatin family. Expressed only in roots.

In terms of biological role, involved in local responses of roots to colonization by non-pathogenic plant growth-promoting rhizobacteria (PGPR) fluorescent Pseudomonas spp., but seems to not being required for the establishment of subsequent induced systemic resistance (ISR). In Arabidopsis thaliana (Mouse-ear cress), this protein is Thaumatin-like protein 1.